We begin with the raw amino-acid sequence, 206 residues long: Pyridoxine/pyridoxamine 5'-phosphate oxidase (206 aa).

Residues 53–58 (RMVLLK), 68–69 (YT), Lys75, and Gln97 each bind FMN. Lys58 contributes to the substrate binding site. Residues Tyr115, Arg119, and Ser123 each coordinate substrate. FMN-binding positions include 132-133 (QS) and Trp177. Residue 183 to 185 (RLH) participates in substrate binding. Residue Arg187 coordinates FMN.

Belongs to the pyridoxamine 5'-phosphate oxidase family. Homodimer. The cofactor is FMN.

The enzyme catalyses pyridoxamine 5'-phosphate + O2 + H2O = pyridoxal 5'-phosphate + H2O2 + NH4(+). It catalyses the reaction pyridoxine 5'-phosphate + O2 = pyridoxal 5'-phosphate + H2O2. Its pathway is cofactor metabolism; pyridoxal 5'-phosphate salvage; pyridoxal 5'-phosphate from pyridoxamine 5'-phosphate: step 1/1. The protein operates within cofactor metabolism; pyridoxal 5'-phosphate salvage; pyridoxal 5'-phosphate from pyridoxine 5'-phosphate: step 1/1. In terms of biological role, catalyzes the oxidation of either pyridoxine 5'-phosphate (PNP) or pyridoxamine 5'-phosphate (PMP) into pyridoxal 5'-phosphate (PLP). This is Pyridoxine/pyridoxamine 5'-phosphate oxidase from Rhizobium etli (strain CIAT 652).